The sequence spans 2692 residues: Thyroglobulin (2692 aa).

A signal peptide spans 1 to 19; that stretch reads MALALWVFALLGSACLVSA. Tyr24 is modified (iodotyrosine; alternate). Residue Tyr24 is modified to Sulfotyrosine; alternate. The residue at position 24 (Tyr24) is a Thyroxine; alternate. Residue Tyr24 is modified to Triiodothyronine; alternate. Thyroglobulin type-1 domains are found at residues 31–92, 93–160, and 161–248; these read LRPC…PVAC, LSFC…PARC, and PGSC…LAGT. 8 cysteine pairs are disulfide-bonded: Cys34-Cys52, Cys63-Cys70, Cys72-Cys92, Cys96-Cys120, Cys131-Cys138, Cys140-Cys160, Cys164-Cys183, and Cys194-Cys235. Tyr108 is modified (iodotyrosine). Asn110 carries an N-linked (GlcNAc...) asparagine glycan. Tyr149 carries the iodotyrosine; alternate modification. A Diiodotyrosine; alternate modification is found at Tyr149. Asn198 is a glycosylation site (N-linked (GlcNAc...) asparagine). Residues Tyr234 and Tyr258 each carry the iodotyrosine modification. The Thyroglobulin type-1 4 domain occupies 298 to 358; sequence PTKCEVERFA…TRRPSEPLSC (61 aa). Cystine bridges form between Cys301-Cys319, Cys330-Cys336, Cys338-Cys358, Cys364-Cys621, Cys408-Cys609, Cys632-Cys637, Cys639-Cys659, Cys663-Cys688, and Cys699-Cys704. Asn485, Asn497, and Asn546 each carry an N-linked (GlcNAc...) asparagine glycan. Thyroglobulin type-1 domains follow at residues 606–659, 660–727, and 728–923; these read SQGC…RPRC, PTAC…PKQC, and PTPC…VPAC. Position 705 is an iodotyrosine; alternate (Tyr705). Tyr705 is modified (thyroxine; alternate). Tyr705 carries the triiodothyronine; alternate modification. Tyr705 is subject to Diiodotyrosine; alternate. 13 cysteine pairs are disulfide-bonded: Cys706/Cys727, Cys731/Cys764, Cys775/Cys900, Cys902/Cys923, Cys927/Cys1033, Cys1044/Cys1051, Cys1053/Cys1079, Cys1128/Cys1147, Cys1151/Cys1171, Cys1183/Cys1190, Cys1192/Cys1212, Cys1237/Cys1287, and Cys1262/Cys1278. Asn749 carries an N-linked (GlcNAc...) asparagine glycan. Residue Tyr786 is modified to Iodotyrosine. N-linked (GlcNAc...) asparagine glycosylation occurs at Asn855. The residue at position 868 (Tyr868) is an Iodotyrosine; alternate. A Diiodotyrosine; alternate modification is found at Tyr868. Residue Tyr885 is modified to Diiodotyrosine. Asn949 carries N-linked (GlcNAc...) asparagine glycosylation. Position 994 is an iodotyrosine; alternate (Tyr994). Diiodotyrosine; alternate is present on Tyr994. Thyroglobulin type-1 domains follow at residues 1021–1079, 1088–1147, and 1148–1212; these read SGPL…PTPC, LSAW…SAPC, and PGLC…QPAC. A glycan (N-linked (GlcNAc...) asparagine) is linked at Asn1142. Tyr1241 bears the Iodotyrosine mark. Thyroxine is present on Tyr1241. Asn1296 and Asn1384 each carry an N-linked (GlcNAc...) asparagine glycan. 13 disulfides stabilise this stretch: Cys1372/Cys1392, Cys1395/Cys1406, Cys1409/Cys1423, Cys1426/Cys1443, Cys1447/Cys1456, Cys1476/Cys1498, Cys1535/Cys1559, Cys1539/Cys1545, Cys1571/Cys1594, Cys1656/Cys1681, Cys1660/Cys1666, Cys1665/Cys1766, and Cys1692/Cys1709. 3 Type II repeats span residues 1389 to 1402, 1403 to 1419, and 1420 to 1436; these read PLGCVRCPEGSYFQ, EEQCIPCPAGFYQEQTG, and SLACAPCPAGTTTTSVG. Position 1400 is an iodotyrosine; alternate (Tyr1400). A Diiodotyrosine; alternate modification is found at Tyr1400. The region spanning 1444–1498 is the Thyroglobulin type-1 11 domain; the sequence is VTACQRDEAGLQCDQDGQYRASQRDRASGKAFCVDSEGRRLPWSETQAPLVDAQC. Residues 1535–1655 form a Type IIIA repeat; the sequence is CLADCARDEA…GASLTEAHLF (121 aa). The Type IIIB repeat unit spans residues 1656–1823; sequence CLLACDRDSC…LFSLQQAHLW (168 aa). N-linked (GlcNAc...) asparagine glycosylation is present at Asn1800. Intrachain disulfides connect Cys1824–Cys1850, Cys1828–Cys1835, Cys1859–Cys1870, Cys1927–Cys1955, Cys1931–Cys1937, Cys1936–Cys2007, Cys1966–Cys1979, Cys2061–Cys2085, Cys2065–Cys2071, and Cys2094–Cys2103. Residues 1824-1926 form a Type IIIA repeat; that stretch reads CLSRCVQEPS…DKAISSGFFE (103 aa). The stretch at 1927–2060 is one Type IIIB repeat; the sequence is CERLCDVDPC…VGDFSAARER (134 aa). A glycan (N-linked (GlcNAc...) asparagine) is linked at Asn1944. One copy of the Type IIIA repeat lies at 2061 to 2118; sequence CLLECSRHQACLVTTLQTRPGAVRCMFYADTQSCTHSLQAQNCQLLLREEATHIYRKP. Tyr2115 is modified (iodotyrosine). Residues 2119 to 2692 form a cholinesterase-like (ChEL) region; it reads DIPLPGLGSS…PELASKSYSK (574 aa). Asn2181 and Asn2226 each carry an N-linked (GlcNAc...) asparagine glycan. The residue at position 2467 (Tyr2467) is a Thyroxine. Tyr2500 bears the Iodotyrosine; alternate mark. Thyroxine; alternate is present on Tyr2500. The residue at position 2500 (Tyr2500) is a Triiodothyronine; alternate. A Diiodotyrosine; alternate modification is found at Tyr2500. Iodotyrosine occurs at positions 2514 and 2544. Cys2518 and Cys2642 are oxidised to a cystine. Diiodotyrosine is present on Tyr2624. Residues 2658-2671 show a composition bias toward acidic residues; sequence EAEDGPLAESEEED. The segment at 2658–2692 is disordered; the sequence is EAEDGPLAESEEEDRPGLTEDLLGLPELASKSYSK. An Iodotyrosine; alternate modification is found at Tyr2690. A Thyroxine; alternate modification is found at Tyr2690. Tyr2690 carries the post-translational modification Triiodothyronine; alternate. Diiodotyrosine; alternate is present on Tyr2690.

Belongs to the type-B carboxylesterase/lipase family. As to quaternary structure, monomer. Homodimer (via ChEL region); occurs in the endoplasmic reticulum and is required for export to the Golgi apparatus. Homooligomer; disulfide-linked; stored in this form in the thyroid follicle lumen. In terms of processing, iodinated on tyrosine residues by TPO. There are 4 pairs of iodinated tyrosines used for coupling: acceptor Tyr-24 is coupled to donor Tyr-149 or Tyr-234, acceptor Tyr-2500 is coupled to donor Tyr-2467, acceptor Tyr-2690 in monomer 1 is coupled to donor Tyr-2690 in monomer 2 and acceptor Tyr-1241 in monomer 1 is coupled to donor Tyr-108 in monomer 2. Post-translationally, sulfated tyrosines are desulfated during iodination. Undergoes sequential proteolysis by cathepsins to release thyroxine (T4) and triiodothyronine (T3) hormones. In the thyroid follicle lumen, cross-linked TG (storage form) is solubilized by limited proteolysis mediated by cathepsins CTSB and/or CTSL. Partially cleaved TG is further processed by CTSK/cathepsin K and/or CTSL resulting in the release of T4. Following endocytosis, further processing occurs leading to the release of T3 and more T4 hormones. As to expression, expressed in thyroid epithelial cells.

It is found in the secreted. Acts as a substrate for the production of iodinated thyroid hormones thyroxine (T4) and triiodothyronine (T3). The synthesis of T3 and T4 involves iodination of selected tyrosine residues of TG/thyroglobulin followed by their oxidative coupling. Following TG re-internalization and lysosomal-mediated proteolysis, T3 and T4 are released from the polypeptide backbone leading to their secretion into the bloodstream. One dimer produces 7 thyroid hormone molecules. The chain is Thyroglobulin from Sus scrofa (Pig).